Reading from the N-terminus, the 483-residue chain is Aspartyl/glutamyl-tRNA(Asn/Gln) amidotransferase subunit B (483 aa).

Belongs to the GatB/GatE family. GatB subfamily. As to quaternary structure, heterotrimer of A, B and C subunits.

It catalyses the reaction L-glutamyl-tRNA(Gln) + L-glutamine + ATP + H2O = L-glutaminyl-tRNA(Gln) + L-glutamate + ADP + phosphate + H(+). The enzyme catalyses L-aspartyl-tRNA(Asn) + L-glutamine + ATP + H2O = L-asparaginyl-tRNA(Asn) + L-glutamate + ADP + phosphate + 2 H(+). In terms of biological role, allows the formation of correctly charged Asn-tRNA(Asn) or Gln-tRNA(Gln) through the transamidation of misacylated Asp-tRNA(Asn) or Glu-tRNA(Gln) in organisms which lack either or both of asparaginyl-tRNA or glutaminyl-tRNA synthetases. The reaction takes place in the presence of glutamine and ATP through an activated phospho-Asp-tRNA(Asn) or phospho-Glu-tRNA(Gln). The protein is Aspartyl/glutamyl-tRNA(Asn/Gln) amidotransferase subunit B of Rickettsia africae (strain ESF-5).